A 1377-amino-acid polypeptide reads, in one-letter code: DNA-directed RNA polymerase subunit beta' (1377 aa).

4 residues coordinate Zn(2+): Cys60, Cys62, Cys75, and Cys78. Mg(2+) is bound by residues Asp449, Asp451, and Asp453. Zn(2+) contacts are provided by Cys777, Cys851, Cys858, and Cys861.

The protein belongs to the RNA polymerase beta' chain family. The RNAP catalytic core consists of 2 alpha, 1 beta, 1 beta' and 1 omega subunit. When a sigma factor is associated with the core the holoenzyme is formed, which can initiate transcription. It depends on Mg(2+) as a cofactor. Zn(2+) serves as cofactor.

It carries out the reaction RNA(n) + a ribonucleoside 5'-triphosphate = RNA(n+1) + diphosphate. Its function is as follows. DNA-dependent RNA polymerase catalyzes the transcription of DNA into RNA using the four ribonucleoside triphosphates as substrates. In Borreliella afzelii (strain PKo) (Borrelia afzelii), this protein is DNA-directed RNA polymerase subunit beta'.